The following is a 491-amino-acid chain: Protein nucleotidyltransferase YdiU (491 aa).

The ATP site is built by Gly-88, Gly-90, Arg-91, Lys-111, Asp-123, Gly-124, Arg-174, and Arg-181. Asp-250 serves as the catalytic Proton acceptor. Asn-251 and Asp-260 together coordinate Mg(2+). Asp-260 lines the ATP pocket. A compositionally biased stretch (basic and acidic residues) spans 466–484 (DDQPDRADYAEPPQPEERV). Residues 466 to 491 (DDQPDRADYAEPPQPEERVLQTFCGT) form a disordered region.

This sequence belongs to the SELO family. It depends on Mg(2+) as a cofactor. Requires Mn(2+) as cofactor.

It catalyses the reaction L-seryl-[protein] + ATP = 3-O-(5'-adenylyl)-L-seryl-[protein] + diphosphate. It carries out the reaction L-threonyl-[protein] + ATP = 3-O-(5'-adenylyl)-L-threonyl-[protein] + diphosphate. The catalysed reaction is L-tyrosyl-[protein] + ATP = O-(5'-adenylyl)-L-tyrosyl-[protein] + diphosphate. The enzyme catalyses L-histidyl-[protein] + UTP = N(tele)-(5'-uridylyl)-L-histidyl-[protein] + diphosphate. It catalyses the reaction L-seryl-[protein] + UTP = O-(5'-uridylyl)-L-seryl-[protein] + diphosphate. It carries out the reaction L-tyrosyl-[protein] + UTP = O-(5'-uridylyl)-L-tyrosyl-[protein] + diphosphate. In terms of biological role, nucleotidyltransferase involved in the post-translational modification of proteins. It can catalyze the addition of adenosine monophosphate (AMP) or uridine monophosphate (UMP) to a protein, resulting in modifications known as AMPylation and UMPylation. This Bradyrhizobium sp. (strain ORS 278) protein is Protein nucleotidyltransferase YdiU.